The following is a 541-amino-acid chain: Phenazine N-monooxygenase PhzNO1 (541 aa).

FAD contacts are provided by residues D39, 47-50 (TWYW), 59-60 (DT), Y65, and I112. 57-59 (RAD) contributes to the NADP(+) binding site. Residues 186-192 (TGSTGVQ), 209-210 (RS), and W492 each bind NADP(+).

Belongs to the FAD-binding monooxygenase family. Requires FAD as cofactor.

It carries out the reaction 1,6-dihydroxyphenazine + NADPH + O2 = 1,6-dihydroxyphenazine N(5)-oxide + NADP(+) + H2O. The catalysed reaction is 1,6-dihydroxyphenazine N(5)-oxide + NADPH + O2 = 1,6-dihydroxyphenazine N(5),N(10)-dioxide + NADP(+) + H2O. The enzyme catalyses 1-hydroxy-6-methoxyphenazine + NADPH + O2 = 1-hydroxy-6-methoxyphenazine N(10)-oxide + NADP(+) + H2O. It catalyses the reaction quinolin-8-ol + NADPH + O2 = 8-hydroxyquinoline N-oxide + NADP(+) + H2O. Functionally, involved in the biosynthesis of phenazine natural products including myxin, an N(5),N(10)-dioxide phenazine antiobiotic, which has antimicrobial activity. Catalyzes the aromatic N-oxidations of phenazines, such as 1,6-dihydroxyphenazine (DHP), 1,6-dihydroxyphenazine N(5)-oxide (DHPO) and 1-hydroxy-6-methoxyphenazine to produce DHPO, iodinin (1,6-dihydroxyphenazine N(5),N(10)-dioxide) and 1-hydroxy-6-methoxyphenazine N(10)-oxide, respectively. Also catalyzes the N-oxidation of 8-hydroxyquinoline, but not 6-hydroxyquinoline (6-HQ), quinoline, quinoxaline, quinine and 2-phenylpyridine. The chain is Phenazine N-monooxygenase PhzNO1 from Lysobacter antibioticus.